A 78-amino-acid chain; its full sequence is DNA import protein CedA1 (78 aa).

Helical transmembrane passes span 12–32 (STVT…GWAL) and 53–73 (AIIA…ISYI).

As to quaternary structure, forms a complex composed of CedA, CedA1 and CedA2.

Its subcellular location is the cell membrane. Functionally, part of the Ced system, which is involved in DNA import. The polypeptide is DNA import protein CedA1 (Sulfolobus acidocaldarius (strain ATCC 33909 / DSM 639 / JCM 8929 / NBRC 15157 / NCIMB 11770)).